We begin with the raw amino-acid sequence, 189 residues long: uncharacterized protein (189 aa).

The HTH tetR-type domain occupies 2–62; the sequence is RPTNKRILDA…ALLSQHSSNR (61 aa). Positions 25-44 form a DNA-binding region, H-T-H motif; the sequence is TTKEIAEKANVSEATIFRNF.

This is an uncharacterized protein from Bacillus subtilis (strain 168).